Reading from the N-terminus, the 211-residue chain is uncharacterized protein (211 aa).

2 disordered regions span residues 45–74 and 147–211; these read RSCG…GALS and AETR…WEEP. Low complexity predominate over residues 48–71; the sequence is GRSSTGGCSPCSGPGPSSPRTSRG. Positions 195–205 are enriched in polar residues; sequence DSGSIKMSENE.

This is an uncharacterized protein from Homo sapiens (Human).